We begin with the raw amino-acid sequence, 128 residues long: uncharacterized protein (128 aa).

3 helical membrane passes run 30 to 50 (ILFTILSVAIIMVAFDSLGSS), 65 to 85 (VFRGNTAKGIAVVGIIVLGIQ), and 93 to 113 (WEVALVVVTAIIILFKAPDIV).

The protein localises to the cell membrane. This is an uncharacterized protein from Rickettsia prowazekii (strain Madrid E).